The chain runs to 173 residues: Shikimate kinase 2 (173 aa).

12–17 (GCGKTT) contributes to the ATP binding site. Residues Thr16 and Asp32 each contribute to the Mg(2+) site. Residues Asp34, Arg58, and Gly79 each contribute to the substrate site. An LID domain region spans residues 112 to 126 (EENPQDNQRPTLTGR). Arg120 serves as a coordination point for ATP. A substrate-binding site is contributed by Arg139. Gln155 is an ATP binding site.

The protein belongs to the shikimate kinase family. AroL subfamily. In terms of assembly, monomer. It depends on Mg(2+) as a cofactor.

The protein localises to the cytoplasm. The catalysed reaction is shikimate + ATP = 3-phosphoshikimate + ADP + H(+). It functions in the pathway metabolic intermediate biosynthesis; chorismate biosynthesis; chorismate from D-erythrose 4-phosphate and phosphoenolpyruvate: step 5/7. Its function is as follows. Catalyzes the specific phosphorylation of the 3-hydroxyl group of shikimic acid using ATP as a cosubstrate. This is Shikimate kinase 2 from Pectobacterium atrosepticum (strain SCRI 1043 / ATCC BAA-672) (Erwinia carotovora subsp. atroseptica).